The following is a 210-amino-acid chain: ATP phosphoribosyltransferase (210 aa).

The protein belongs to the ATP phosphoribosyltransferase family. Short subfamily. In terms of assembly, heteromultimer composed of HisG and HisZ subunits.

The protein resides in the cytoplasm. It catalyses the reaction 1-(5-phospho-beta-D-ribosyl)-ATP + diphosphate = 5-phospho-alpha-D-ribose 1-diphosphate + ATP. The protein operates within amino-acid biosynthesis; L-histidine biosynthesis; L-histidine from 5-phospho-alpha-D-ribose 1-diphosphate: step 1/9. Catalyzes the condensation of ATP and 5-phosphoribose 1-diphosphate to form N'-(5'-phosphoribosyl)-ATP (PR-ATP). Has a crucial role in the pathway because the rate of histidine biosynthesis seems to be controlled primarily by regulation of HisG enzymatic activity. In Synechocystis sp. (strain ATCC 27184 / PCC 6803 / Kazusa), this protein is ATP phosphoribosyltransferase (hisG).